Here is a 391-residue protein sequence, read N- to C-terminus: Immunoglobulin heavy constant alpha 2 (391 aa).

Residues 1–357 are Extracellular-facing; that stretch reads ASPTSPKVFP…TPGANLWPTT (357 aa). Ig-like domains follow at residues 6–98, 112–207, and 215–317; these read PKVF…QDVT, PRLS…ANIT, and PEVH…KTID. A disulfide bridge links Cys-26 with Cys-85. N-linked (GlcNAc...) asparagine glycosylation occurs at Asn-47. Asn-92 is a glycosylation site (N-linked (GlcNAc...) (complex) asparagine). 2 disulfides stabilise this stretch: Cys-110-Cys-167 and Cys-134-Cys-191. N-linked (GlcNAc...) asparagine glycosylation is present at Asn-131. N-linked (GlcNAc...) (complex) asparagine glycosylation is present at Asn-205. Cysteines 237 and 300 form a disulfide. Residue Asp-327 is glycosylated (N-linked (GlcNAc...) (complex) asparagine). A helical membrane pass occupies residues 358-379; that stretch reads ITFLTLFLLSLFYSTALTVTSV. The Cytoplasmic portion of the chain corresponds to 380 to 391; sequence RGPSGKREGPQY.

As to quaternary structure, immunoglobulins are composed of two identical heavy chains and two identical light chains; disulfide-linked. Monomeric or polymeric. Part of the secretory IgA (sIgA) complex that consists of two, four or five IgA monomers, and two additional non-Ig polypeptides, namely the JCHAIN and the secretory component (the proteolytic product of PIGR).

It localises to the secreted. It is found in the cell membrane. Its function is as follows. Constant region of immunoglobulin heavy chains. Immunoglobulins, also known as antibodies, are membrane-bound or secreted glycoproteins produced by B lymphocytes. In the recognition phase of humoral immunity, the membrane-bound immunoglobulins serve as receptors which, upon binding of a specific antigen, trigger the clonal expansion and differentiation of B lymphocytes into immunoglobulins-secreting plasma cells. Secreted immunoglobulins mediate the effector phase of humoral immunity, which results in the elimination of bound antigens. The antigen binding site is formed by the variable domain of one heavy chain, together with that of its associated light chain. Thus, each immunoglobulin has two antigen binding sites with remarkable affinity for a particular antigen. The variable domains are assembled by a process called V-(D)-J rearrangement and can then be subjected to somatic hypermutations which, after exposure to antigen and selection, allow affinity maturation for a particular antigen. Ig alpha is the major immunoglobulin class in body secretions. The protein is Immunoglobulin heavy constant alpha 2 of Homo sapiens (Human).